The chain runs to 348 residues: 11-beta-hydroxysteroid dehydrogenase A (348 aa).

A helical; Signal-anchor for type II membrane protein transmembrane segment spans residues 10–30; the sequence is LIAPPFTFFFLLFFLPPFQIF. Residues 13-26 carry the Proline-knob motif; sequence PPFTFFFLLFFLPP. NADP(+) is bound by residues 54–80, Asp105, and 132–135; these read GASS…AARR and NAGI. Ser184 is a substrate binding site. Tyr197 (proton acceptor) is an active-site residue. NADP(+)-binding positions include 197–201 and Lys201; that span reads YNASK.

Belongs to the short-chain dehydrogenases/reductases (SDR) family. In terms of tissue distribution, expressed in seeds (at protein level). Not expressed in stem, leaf or root (at protein level).

Its subcellular location is the lipid droplet. The protein resides in the membrane. The catalysed reaction is an 11beta-hydroxysteroid + NADP(+) = an 11-oxosteroid + NADPH + H(+). It carries out the reaction an 11beta-hydroxysteroid + NAD(+) = an 11-oxosteroid + NADH + H(+). It catalyses the reaction corticosterone + NADP(+) = 11-dehydrocorticosterone + NADPH + H(+). The enzyme catalyses corticosterone + NAD(+) = 11-dehydrocorticosterone + NADH + H(+). The catalysed reaction is 17beta-estradiol + NADP(+) = estrone + NADPH + H(+). It carries out the reaction 17beta-estradiol + NAD(+) = estrone + NADH + H(+). Its function is as follows. Has dehydrogenase activity against corticosterone (11 beta-hydroxysteroid) and estradiol (17 beta-hydroxysteroid), with higher activity against estradiol. Possesses higher dehydrogenase activity with NADP(+) than NAD(+) regardless of the sterol substrate. May be involved in signal transduction regulated by various sterols. This chain is 11-beta-hydroxysteroid dehydrogenase A, found in Sesamum indicum (Oriental sesame).